The chain runs to 199 residues: Histone deacetylase complex subunit SAP25 (199 aa).

2 stretches are compositionally biased toward polar residues: residues 151-163 and 184-199; these read QMSQ…SSSA and QGAD…THCP. The disordered stretch occupies residues 151-199; that stretch reads QMSQGEPRPSSSAVGPPDHTSDPPSPCGSPSSSQGADLSLPQTPDTHCP.

May be a component of the mSIN3A corepressor complex. Interacts with SIN3A. Interacts with HDAC2.

The protein localises to the nucleus. The protein resides in the cytoplasm. Functionally, involved in the transcriptional repression mediated by the mSIN3A but not the N-CoR corepressor complex. In Homo sapiens (Human), this protein is Histone deacetylase complex subunit SAP25 (SAP25).